Reading from the N-terminus, the 663-residue chain is Protein MNE1 (663 aa).

This chain is Protein MNE1 (MNE1), found in Saccharomyces cerevisiae (strain ATCC 204508 / S288c) (Baker's yeast).